Reading from the N-terminus, the 211-residue chain is Methylthioribulose-1-phosphate dehydratase (211 aa).

Positions 105 and 107 each coordinate Zn(2+).

It belongs to the aldolase class II family. MtnB subfamily. Zn(2+) serves as cofactor.

It catalyses the reaction 5-(methylsulfanyl)-D-ribulose 1-phosphate = 5-methylsulfanyl-2,3-dioxopentyl phosphate + H2O. The protein operates within amino-acid biosynthesis; L-methionine biosynthesis via salvage pathway; L-methionine from S-methyl-5-thio-alpha-D-ribose 1-phosphate: step 2/6. In terms of biological role, catalyzes the dehydration of methylthioribulose-1-phosphate (MTRu-1-P) into 2,3-diketo-5-methylthiopentyl-1-phosphate (DK-MTP-1-P). The polypeptide is Methylthioribulose-1-phosphate dehydratase (Acidiphilium cryptum (strain JF-5)).